Reading from the N-terminus, the 75-residue chain is DNA-directed RNA polymerase subunit Rpo5 (75 aa).

This sequence belongs to the archaeal Rpo5/eukaryotic RPB5 RNA polymerase subunit family. As to quaternary structure, part of the RNA polymerase complex.

It is found in the cytoplasm. The enzyme catalyses RNA(n) + a ribonucleoside 5'-triphosphate = RNA(n+1) + diphosphate. Its function is as follows. DNA-dependent RNA polymerase (RNAP) catalyzes the transcription of DNA into RNA using the four ribonucleoside triphosphates as substrates. The chain is DNA-directed RNA polymerase subunit Rpo5 from Halobacterium salinarum (strain ATCC 700922 / JCM 11081 / NRC-1) (Halobacterium halobium).